Here is a 389-residue protein sequence, read N- to C-terminus: Acetylornithine aminotransferase (389 aa).

Pyridoxal 5'-phosphate-binding positions include 104 to 105 (GT) and F131. R134 provides a ligand contact to N(2)-acetyl-L-ornithine. 216–219 (DEVQ) lines the pyridoxal 5'-phosphate pocket. K245 carries the post-translational modification N6-(pyridoxal phosphate)lysine. Residue S273 coordinates N(2)-acetyl-L-ornithine. Residue T274 participates in pyridoxal 5'-phosphate binding.

Belongs to the class-III pyridoxal-phosphate-dependent aminotransferase family. ArgD subfamily. As to quaternary structure, homodimer. Pyridoxal 5'-phosphate serves as cofactor.

It localises to the cytoplasm. The catalysed reaction is N(2)-acetyl-L-ornithine + 2-oxoglutarate = N-acetyl-L-glutamate 5-semialdehyde + L-glutamate. It functions in the pathway amino-acid biosynthesis; L-arginine biosynthesis; N(2)-acetyl-L-ornithine from L-glutamate: step 4/4. The polypeptide is Acetylornithine aminotransferase (Methanopyrus kandleri (strain AV19 / DSM 6324 / JCM 9639 / NBRC 100938)).